The chain runs to 397 residues: Acetate kinase 2 (397 aa).

Asparagine 10 provides a ligand contact to Mg(2+). Lysine 17 is a binding site for ATP. Arginine 90 contacts substrate. Residue aspartate 147 is the Proton donor/acceptor of the active site. Residues 207 to 211 (HLGNG), 281 to 283 (DAR), and 329 to 333 (GIGEN) each bind ATP. Glutamate 385 provides a ligand contact to Mg(2+).

Belongs to the acetokinase family. Homodimer. It depends on Mg(2+) as a cofactor. Requires Mn(2+) as cofactor.

Its subcellular location is the cytoplasm. The enzyme catalyses acetate + ATP = acetyl phosphate + ADP. It participates in metabolic intermediate biosynthesis; acetyl-CoA biosynthesis; acetyl-CoA from acetate: step 1/2. In terms of biological role, catalyzes the formation of acetyl phosphate from acetate and ATP. Can also catalyze the reverse reaction. The chain is Acetate kinase 2 from Vibrio vulnificus (strain CMCP6).